A 286-amino-acid chain; its full sequence is Polyamine aminopropyltransferase (286 aa).

In terms of domain architecture, PABS spans 5–238 (TMWHETLHDQ…GIMTFAWATD (234 aa)). Glutamine 33 provides a ligand contact to S-methyl-5'-thioadenosine. Positions 64 and 88 each coordinate spermidine. S-methyl-5'-thioadenosine is bound by residues glutamate 108 and 140 to 141 (DG). Aspartate 158 functions as the Proton acceptor in the catalytic mechanism. 158 to 161 (DCTD) contributes to the spermidine binding site. An S-methyl-5'-thioadenosine-binding site is contributed by proline 165.

The protein belongs to the spermidine/spermine synthase family. As to quaternary structure, homodimer or homotetramer.

It localises to the cytoplasm. It catalyses the reaction S-adenosyl 3-(methylsulfanyl)propylamine + putrescine = S-methyl-5'-thioadenosine + spermidine + H(+). The protein operates within amine and polyamine biosynthesis; spermidine biosynthesis; spermidine from putrescine: step 1/1. Its function is as follows. Catalyzes the irreversible transfer of a propylamine group from the amino donor S-adenosylmethioninamine (decarboxy-AdoMet) to putrescine (1,4-diaminobutane) to yield spermidine. The polypeptide is Polyamine aminopropyltransferase (Salmonella schwarzengrund (strain CVM19633)).